The sequence spans 188 residues: GTP cyclohydrolase 1 (188 aa).

Residues Cys-76, His-79, and Cys-148 each contribute to the Zn(2+) site.

Belongs to the GTP cyclohydrolase I family. Homomer.

It carries out the reaction GTP + H2O = 7,8-dihydroneopterin 3'-triphosphate + formate + H(+). The protein operates within cofactor biosynthesis; 7,8-dihydroneopterin triphosphate biosynthesis; 7,8-dihydroneopterin triphosphate from GTP: step 1/1. This Thermoanaerobacter pseudethanolicus (strain ATCC 33223 / 39E) (Clostridium thermohydrosulfuricum) protein is GTP cyclohydrolase 1.